The chain runs to 79 residues: D-alanyl carrier protein (79 aa).

Residues 2-79 form the Carrier domain; sequence AEFKEQVLDI…MVIKKLEEIR (78 aa). Residue S37 is modified to O-(pantetheine 4'-phosphoryl)serine.

This sequence belongs to the DltC family. In terms of processing, 4'-phosphopantetheine is transferred from CoA to a specific serine of apo-DCP.

The protein resides in the cytoplasm. It participates in cell wall biogenesis; lipoteichoic acid biosynthesis. Functionally, carrier protein involved in the D-alanylation of lipoteichoic acid (LTA). The loading of thioester-linked D-alanine onto DltC is catalyzed by D-alanine--D-alanyl carrier protein ligase DltA. The DltC-carried D-alanyl group is further transferred to cell membrane phosphatidylglycerol (PG) by forming an ester bond, probably catalyzed by DltD. D-alanylation of LTA plays an important role in modulating the properties of the cell wall in Gram-positive bacteria, influencing the net charge of the cell wall. The chain is D-alanyl carrier protein from Bacillus mycoides (strain KBAB4) (Bacillus weihenstephanensis).